Reading from the N-terminus, the 305-residue chain is MKPRVLVIAGPTASGKSALALDLAVALDGEIICADSLTVYRGLDIGSAKPTAEQQRQIPHHLLDIREPTEPFTAADFKLAAKAAIAAICQRGKRPILAGGTGLYLRALLRGLNDAPGEDPVLRETLRKRLECEGAETLLAELAKVDPDTSQRLHPNNRNRIIRALEVFQTTGIPLSQFQAEHGFADSPYDSLQFCLDLPRPELYQRIDDRVDAMLAAGLVAEVQGLLQSGVPADCKPLQAIGYKEVLAHLQGEYDHNEMVRLIKRNTRHFAKRQLTWFRSEPAMQWVAYPENSATIHSAAATFFA.

ATP is bound at residue 10–17 (GPTASGKS). 12-17 (TASGKS) contacts substrate. Residues 35–38 (DSLT) are interaction with substrate tRNA.

It belongs to the IPP transferase family. As to quaternary structure, monomer. Requires Mg(2+) as cofactor.

It catalyses the reaction adenosine(37) in tRNA + dimethylallyl diphosphate = N(6)-dimethylallyladenosine(37) in tRNA + diphosphate. Its function is as follows. Catalyzes the transfer of a dimethylallyl group onto the adenine at position 37 in tRNAs that read codons beginning with uridine, leading to the formation of N6-(dimethylallyl)adenosine (i(6)A). The polypeptide is tRNA dimethylallyltransferase 1 (Trichlorobacter lovleyi (strain ATCC BAA-1151 / DSM 17278 / SZ) (Geobacter lovleyi)).